The primary structure comprises 97 residues: UPF0235 protein PFL_5841 (97 aa).

The protein belongs to the UPF0235 family.

The polypeptide is UPF0235 protein PFL_5841 (Pseudomonas fluorescens (strain ATCC BAA-477 / NRRL B-23932 / Pf-5)).